The chain runs to 270 residues: MAVITKIEVQKRSKERFNIYIDKGQGEEYGFSVNEVILIKHGLQKGLEIDEIALGNILYNEEVQKAYLQAISYLSYQMRTKLEIEDFLRKKEVGQAIISEVVSKLLHDRYINDKEYAILYTRTQSNVNRKGPTVIKRELLNKGVQDLIIMHSLQEYTKEKQIENALILIEKKKKSYQKHSFLQMKLKLDEMLVRKGYSRDVIQICLEELKDEKDDEKQQEALHYHGNKYYEKYKKYDGWTFENKMKQALYRKGFSIDEIEIFLQMKREEG.

This sequence belongs to the RecX family.

The protein localises to the cytoplasm. In terms of biological role, modulates RecA activity. This is Regulatory protein RecX from Bacillus anthracis (strain A0248).